Consider the following 563-residue polypeptide: Arginine--tRNA ligase (563 aa).

A 'HIGH' region motif is present at residues 121 to 131 (PNIAKPFSIGH).

It belongs to the class-I aminoacyl-tRNA synthetase family. In terms of assembly, monomer.

It is found in the cytoplasm. The catalysed reaction is tRNA(Arg) + L-arginine + ATP = L-arginyl-tRNA(Arg) + AMP + diphosphate. The polypeptide is Arginine--tRNA ligase (Streptococcus pyogenes serotype M12 (strain MGAS2096)).